A 382-amino-acid polypeptide reads, in one-letter code: Probable cytosolic iron-sulfur protein assembly protein 1 (382 aa).

WD repeat units lie at residues 9–48 (AHHDKIWSVSSHQKLPLLATGSSDKTSAIFRLSETEKFPR), 55–107 (THTR…DNDE), 138–178 (GHEH…EEFE), 185–224 (EHQQDVKHVIWHPTQNLLASSSYDDTICIYRQEYDDDDWG), 231–278 (GHQG…SETN), 303–342 (AHTYPVYSVVWSSVSGRIASAGADGKIAVYKQTDGVWEIE), and 349–382 (HGVHEINTLAWSKLDDNREVLVSGGDDGYVNVWE).

Belongs to the WD repeat CIA1 family. Interacts with NAR1.

The protein localises to the cytoplasm. It is found in the nucleus. Essential component of the cytosolic iron-sulfur (Fe/S) protein assembly machinery. Required for the maturation of extramitochondrial Fe/S proteins. The chain is Probable cytosolic iron-sulfur protein assembly protein 1 from Meyerozyma guilliermondii (strain ATCC 6260 / CBS 566 / DSM 6381 / JCM 1539 / NBRC 10279 / NRRL Y-324) (Yeast).